The primary structure comprises 385 residues: Probable thioesterase PNKD (385 aa).

The tract at residues 32-58 is disordered; the sequence is KASHNRTRALQSHSSPEGKEEPEPLSP. Zn(2+) is bound by residues histidine 172, histidine 174, aspartate 176, histidine 177, histidine 229, aspartate 253, and histidine 291.

The protein belongs to the metallo-beta-lactamase superfamily. Glyoxalase II family. In terms of assembly, isoform 2 interacts with the sarcomeric proteins, MRLC2, MYOM1 and ENO3. Requires Zn(2+) as cofactor. Undergoes cleavage at the N-terminus. In terms of tissue distribution, isoform 1 is only expressed in the brain. Isoform 2 is ubiquitously detected with highest expression in skeletal muscle and detected in myocardial myofibrils.

The protein localises to the cell membrane. It localises to the mitochondrion. Its subcellular location is the cytoplasm. The protein resides in the golgi apparatus. It is found in the endoplasmic reticulum. The enzyme catalyses a thioester + H2O = a thiol + a carboxylate + H(+). In terms of biological role, probable thioesterase that may play a role in cellular detoxification processes; it likely acts on a yet-unknown alpha-hydroxythioester substrate. In vitro, it is able to catalyze the hydrolysis of S-D-lactoyl-glutathione to form glutathione and D-lactic acid at very low rate, though this reaction is not physiologically relevant in vivo. This Homo sapiens (Human) protein is Probable thioesterase PNKD (PNKD).